A 229-amino-acid chain; its full sequence is MENSLKIKDIPKKERPKEKLLSYGADTLNNSELLAIILRTGTKGENVLQLSNRLLSKFQGLDGVLEASLDDITSIKGIKEGKASQILALAELFKRFRTFKSADRDIKIMSPNDLAMLINGEMSLLKQEILKVIFLNTKNIVIGTKDVFKGSLNTSIVHPREIFKEAVNKSSAKIIISHNHPSGDPTPSKEDINITLRIKECGEIMGIQLLDHIIIGKNGFISLKEKGFI.

An MPN domain is found at 107–229 (KIMSPNDLAM…FISLKEKGFI (123 aa)). Residues H178, H180, and D191 each contribute to the Zn(2+) site. The short motif at 178-191 (HNHPSGDPTPSKED) is the JAMM motif element.

The protein belongs to the UPF0758 family.

In Clostridium botulinum (strain Eklund 17B / Type B), this protein is UPF0758 protein CLL_A0562.